Consider the following 161-residue polypeptide: Protein-lysine N-methyltransferase (161 aa).

A DxGxGxG SAM-binding motif motif is present at residues Asp-34–Gly-40.

The protein belongs to the class I-like SAM-binding methyltransferase superfamily. In terms of assembly, monomer.

The catalysed reaction is L-lysyl-[protein] + S-adenosyl-L-methionine = N(6)-methyl-L-lysyl-[protein] + S-adenosyl-L-homocysteine + H(+). Functionally, catalyzes the methylation of lysine residues in target proteins, using S-adenosyl-L-methionine (SAM) as the methyl donor. Exhibits broad substrate specificity, being able to methylate the crenarchaeal chromatin protein Cren7 primarily at 'Lys-11', 'Lys-16' and 'Lys-31', as well as a number of recombinant Sulfolobus proteins in vitro. Methylates lysine residues in a rather sequence-independent manner. In Saccharolobus islandicus (strain REY15A) (Sulfolobus islandicus), this protein is Protein-lysine N-methyltransferase.